Consider the following 297-residue polypeptide: SH2 domain-containing protein 6 (297 aa).

Disordered stretches follow at residues 1–61 (MSCP…FPTR) and 74–93 (MNPQ…RGTS). Positions 36-45 (PSKPPLPPPQ) are enriched in pro residues. Residues 187 to 295 (WYSGNCDRQS…RGLTYLRFPT (109 aa)) form the SH2 domain.

This Mus musculus (Mouse) protein is SH2 domain-containing protein 6 (Sh2d6).